A 258-amino-acid polypeptide reads, in one-letter code: Regulatory protein RecX (258 aa).

Belongs to the RecX family.

It is found in the cytoplasm. Its function is as follows. Modulates RecA activity. The protein is Regulatory protein RecX of Streptococcus pyogenes serotype M2 (strain MGAS10270).